A 698-amino-acid chain; its full sequence is Dolichyl-diphosphooligosaccharide--protein glycosyltransferase subunit 2 (698 aa).

An N-terminal signal peptide occupies residues 1–29; the sequence is MAAAGGLPASATLLLLVIAAVAVAPLASA. The Lumenal portion of the chain corresponds to 30–600; it reads VRPVSDAHRS…RSPEKRPPKE (571 aa). A helical membrane pass occupies residues 601-621; sequence LSFAFTGLTLLPIVGFLIGLM. Over 622–638 the chain is Cytoplasmic; the sequence is RLGVNLKNFPSLPAPAA. A helical membrane pass occupies residues 639–659; sequence FASLFHAGIGAVLLLYVLFWI. A topological domain (lumenal) is located at residue K660. Residues 661–681 traverse the membrane as a helical segment; the sequence is LDLFTTLKYLSFLGVFLVFVG. Over 682 to 698 the chain is Cytoplasmic; that stretch reads HRALSYLSSTSAKQKTA.

It belongs to the SWP1 family. In terms of assembly, component of the oligosaccharyltransferase (OST) complex.

The protein resides in the endoplasmic reticulum membrane. It functions in the pathway protein modification; protein glycosylation. Its function is as follows. Subunit of the oligosaccharyl transferase (OST) complex that catalyzes the initial transfer of a defined glycan (Glc(3)Man(9)GlcNAc(2) in eukaryotes) from the lipid carrier dolichol-pyrophosphate to an asparagine residue within an Asn-X-Ser/Thr consensus motif in nascent polypeptide chains, the first step in protein N-glycosylation. N-glycosylation occurs cotranslationally and the complex associates with the Sec61 complex at the channel-forming translocon complex that mediates protein translocation across the endoplasmic reticulum (ER). All subunits are required for a maximal enzyme activity. The protein is Dolichyl-diphosphooligosaccharide--protein glycosyltransferase subunit 2 (RPN2) of Oryza sativa subsp. japonica (Rice).